A 388-amino-acid polypeptide reads, in one-letter code: Riboflavin biosynthesis protein RibBA (388 aa).

The segment at 1 to 186 (MEELREAFEE…MDDVWREFVK (186 aa)) is DHBP synthase. D-ribulose 5-phosphate contacts are provided by residues 21–22 (RE), Asp26, 125–129 (RKGHT), and Glu149. Residue Glu22 participates in Mg(2+) binding. His128 contacts Mg(2+). The interval 187 to 388 (RKLLMKKKAE…LEEIFREVNS (202 aa)) is GTP cyclohydrolase II. Residue 235–239 (RIHSE) coordinates GTP. Residues Cys240, Cys251, and Cys253 each coordinate Zn(2+). Residues Gln256, 277–279 (EGR), and Thr299 contribute to the GTP site. Catalysis depends on Asp311, which acts as the Proton acceptor; for GTP cyclohydrolase activity. The active-site Nucleophile; for GTP cyclohydrolase activity is Arg313. GTP is bound by residues Thr334 and Lys339.

In the N-terminal section; belongs to the DHBP synthase family. It in the C-terminal section; belongs to the GTP cyclohydrolase II family. Mg(2+) is required as a cofactor. The cofactor is Mn(2+). Requires Zn(2+) as cofactor.

The enzyme catalyses D-ribulose 5-phosphate = (2S)-2-hydroxy-3-oxobutyl phosphate + formate + H(+). It catalyses the reaction GTP + 4 H2O = 2,5-diamino-6-hydroxy-4-(5-phosphoribosylamino)-pyrimidine + formate + 2 phosphate + 3 H(+). It participates in cofactor biosynthesis; riboflavin biosynthesis; 2-hydroxy-3-oxobutyl phosphate from D-ribulose 5-phosphate: step 1/1. It functions in the pathway cofactor biosynthesis; riboflavin biosynthesis; 5-amino-6-(D-ribitylamino)uracil from GTP: step 1/4. In terms of biological role, catalyzes the conversion of D-ribulose 5-phosphate to formate and 3,4-dihydroxy-2-butanone 4-phosphate. Catalyzes the conversion of GTP to 2,5-diamino-6-ribosylamino-4(3H)-pyrimidinone 5'-phosphate (DARP), formate and pyrophosphate. This Thermotoga maritima (strain ATCC 43589 / DSM 3109 / JCM 10099 / NBRC 100826 / MSB8) protein is Riboflavin biosynthesis protein RibBA.